A 141-amino-acid polypeptide reads, in one-letter code: VLSAKDKTNISEAWGKIGGHAGEYGAEALERMFFVYPTTKTYFPHFDVSHGSAQVKGHGKKVADALTNAVGHLDDLPGALSALSDLHAHKLRVDPVNFKLLSHCLLVTLANHHPADFTPAVHASLDKFFASVSTVLTSKYR.

In terms of domain architecture, Globin spans 1-141; that stretch reads VLSAKDKTNI…VSTVLTSKYR (141 aa). At serine 3 the chain carries Phosphoserine. The residue at position 7 (lysine 7) is an N6-succinyllysine. Residue threonine 8 is modified to Phosphothreonine. Position 16 is an N6-acetyllysine; alternate (lysine 16). Residue lysine 16 is modified to N6-succinyllysine; alternate. Phosphotyrosine is present on tyrosine 24. An N6-succinyllysine modification is found at lysine 40. Residue serine 49 is modified to Phosphoserine. Histidine 58 lines the O2 pocket. Histidine 87 contacts heme b. Residue serine 102 is modified to Phosphoserine. Threonine 108 is modified (phosphothreonine). Phosphoserine is present on residues serine 124 and serine 131. 2 positions are modified to phosphothreonine: threonine 134 and threonine 137. Serine 138 bears the Phosphoserine mark.

It belongs to the globin family. In terms of assembly, heterotetramer of two alpha chains and two beta chains. In terms of tissue distribution, red blood cells.

Its function is as follows. Involved in oxygen transport from the lung to the various peripheral tissues. In terms of biological role, hemopressin acts as an antagonist peptide of the cannabinoid receptor CNR1. Hemopressin-binding efficiently blocks cannabinoid receptor CNR1 and subsequent signaling. In Mesocricetus auratus (Golden hamster), this protein is Hemoglobin subunit alpha (HBA).